The chain runs to 100 residues: Large ribosomal subunit protein uL23 (100 aa).

Belongs to the universal ribosomal protein uL23 family. Part of the 50S ribosomal subunit. Contacts protein L29, and trigger factor when it is bound to the ribosome.

Its function is as follows. One of the early assembly proteins it binds 23S rRNA. One of the proteins that surrounds the polypeptide exit tunnel on the outside of the ribosome. Forms the main docking site for trigger factor binding to the ribosome. The sequence is that of Large ribosomal subunit protein uL23 from Shewanella amazonensis (strain ATCC BAA-1098 / SB2B).